Reading from the N-terminus, the 493-residue chain is Dipeptide permease D (493 aa).

Transmembrane regions (helical) follow at residues 14 to 34, 49 to 69, 91 to 111, 138 to 158, 167 to 187, 212 to 232, 235 to 255, 267 to 287, 312 to 332, 344 to 364, 379 to 399, 413 to 433, and 458 to 478; these read VVAL…LLIL, ELFS…GYLA, LVLG…AIIV, GGFS…PIAC, WAMG…IFLC, NWGW…VLFW, WSVY…AKIY, LGLI…AQQG, MFQS…AWLV, IWGK…ILTL, LMVL…PVAM, VLTG…AGVI, and VFEQ…LIWL.

Belongs to the major facilitator superfamily. Proton-dependent oligopeptide transporter (POT/PTR) (TC 2.A.17) family. DtpD subfamily.

Its subcellular location is the cell inner membrane. Functionally, probable proton-dependent permease that transports dipeptides. The sequence is that of Dipeptide permease D from Salmonella typhimurium (strain 14028s / SGSC 2262).